A 150-amino-acid chain; its full sequence is MTDKDMIEIWTDGACSGNPGPGGWGALIRWNGHEKELYGGDPATTNNRMEMTAVIEALNALNRPSKITLNVDSTYVKDGLTKWIKGWKRNGWKTADKKPVKNQELWMAMEEACKRHEITWVWVKGHAGDEGNERADGLARKGTDEVRGRK.

Positions 3–144 constitute an RNase H type-1 domain; that stretch reads DKDMIEIWTD…ADGLARKGTD (142 aa). Residues aspartate 12, glutamate 50, aspartate 72, and aspartate 136 each contribute to the Mg(2+) site. Residues 129 to 150 form a disordered region; the sequence is DEGNERADGLARKGTDEVRGRK.

It belongs to the RNase H family. As to quaternary structure, monomer. Requires Mg(2+) as cofactor.

It localises to the cytoplasm. The catalysed reaction is Endonucleolytic cleavage to 5'-phosphomonoester.. Endonuclease that specifically degrades the RNA of RNA-DNA hybrids. The sequence is that of Ribonuclease H from Hyphomonas neptunium (strain ATCC 15444).